Reading from the N-terminus, the 341-residue chain is Adenylosuccinate synthetase (341 aa).

GTP-binding positions include 12–18 and 42–44; these read GDEGKGK and GHS. Residue Asp13 is the Proton acceptor of the active site. Mg(2+)-binding residues include Asp13 and Gly42. IMP is bound by residues 13–16, 40–43, Thr127, Arg141, Gln179, Thr194, and Arg256; these read DEGK and NAGH. His43 acts as the Proton donor in catalysis. 252–258 is a substrate binding site; the sequence is VVTGRKR. Residues Arg258, 284-286, and 324-326 each bind GTP; these read CID and STG.

The protein belongs to the adenylosuccinate synthetase family. In terms of assembly, homodimer. Requires Mg(2+) as cofactor.

It is found in the cytoplasm. The catalysed reaction is IMP + L-aspartate + GTP = N(6)-(1,2-dicarboxyethyl)-AMP + GDP + phosphate + 2 H(+). Its pathway is purine metabolism; AMP biosynthesis via de novo pathway; AMP from IMP: step 1/2. Plays an important role in the de novo pathway of purine nucleotide biosynthesis. Catalyzes the first committed step in the biosynthesis of AMP from IMP. This is Adenylosuccinate synthetase from Methanosphaera stadtmanae (strain ATCC 43021 / DSM 3091 / JCM 11832 / MCB-3).